The chain runs to 238 residues: Uridylate kinase (238 aa).

Position 12 to 15 (Lys12 to Gly15) interacts with ATP. Gly54 contributes to the UMP binding site. The ATP site is built by Gly55 and Arg59. Residues Asp74 and Thr135–Thr142 each bind UMP. ATP contacts are provided by Thr162, Asn163, Tyr168, and Asp171.

Belongs to the UMP kinase family. As to quaternary structure, homohexamer.

The protein resides in the cytoplasm. It catalyses the reaction UMP + ATP = UDP + ADP. Its pathway is pyrimidine metabolism; CTP biosynthesis via de novo pathway; UDP from UMP (UMPK route): step 1/1. Inhibited by UTP. In terms of biological role, catalyzes the reversible phosphorylation of UMP to UDP. The chain is Uridylate kinase from Nitrobacter hamburgensis (strain DSM 10229 / NCIMB 13809 / X14).